The sequence spans 239 residues: MPYQLENRPPDLRESMYFPEIIRGIGTITKHFLKNLFFSRDANPDILARKRGGFGHSDNVTLQYPEERAPYAPAYRGLHRLVPREDGKPRCVACYMCATICPAQCIYIEAAEYPDDPVEKYPAKFVIDELRCIVCGFCVEACPKDAIRMDSGEHTPPSYERSAQIWDEKRLLRGPPVSYQYDPWLRRGSPSIPPDKLEEMRARAKPFPTVATDEASQTPGFSVRALAAEAKDRAQAARK.

2 4Fe-4S ferredoxin-type domains span residues 81–111 and 123–152; these read LVPR…IEAA and AKFV…MDSG. Residues C91, C94, C97, C101, C132, C135, C138, and C142 each coordinate [4Fe-4S] cluster.

It belongs to the complex I 23 kDa subunit family. NDH-1 is composed of 14 different subunits. Subunits NuoA, H, J, K, L, M, N constitute the membrane sector of the complex. [4Fe-4S] cluster serves as cofactor.

It localises to the cell inner membrane. It carries out the reaction a quinone + NADH + 5 H(+)(in) = a quinol + NAD(+) + 4 H(+)(out). Its function is as follows. NDH-1 shuttles electrons from NADH, via FMN and iron-sulfur (Fe-S) centers, to quinones in the respiratory chain. The immediate electron acceptor for the enzyme in this species is believed to be ubiquinone. Couples the redox reaction to proton translocation (for every two electrons transferred, four hydrogen ions are translocated across the cytoplasmic membrane), and thus conserves the redox energy in a proton gradient. This chain is NADH-quinone oxidoreductase subunit I 1, found in Anaeromyxobacter dehalogenans (strain 2CP-C).